The sequence spans 461 residues: Squalene synthase BSS (461 aa).

2 residues coordinate NADP(+): Arg51 and Arg76. Residues Asp79, Glu82, and Asp83 each coordinate Mg(2+). NADP(+)-binding residues include Arg219, Lys322, and Arg324. A helical membrane pass occupies residues 430-450; the sequence is VTQHWWSILIFLISIAVFFIP.

This sequence belongs to the phytoene/squalene synthase family. Mg(2+) is required as a cofactor.

Its subcellular location is the endoplasmic reticulum membrane. It carries out the reaction 2 (2E,6E)-farnesyl diphosphate + NADPH + H(+) = squalene + 2 diphosphate + NADP(+). The enzyme catalyses 2 (2E,6E)-farnesyl diphosphate + NADH + H(+) = squalene + 2 diphosphate + NAD(+). In terms of biological role, converts farnesyl diphosphate (FPP) into squalene, a precursor for sterol biosynthesis in eukaryotes. Does not possess botryococcene synthase activity. This chain is Squalene synthase BSS, found in Botryococcus braunii (Green alga).